Here is a 1264-residue protein sequence, read N- to C-terminus: Valine--tRNA ligase (1264 aa).

Position 2 is an N-acetylserine (Ser2). The GST C-terminal domain maps to 89–219; that stretch reads GSRAAVLVQQ…YSGARPLSHQ (131 aa). The interval 217–296 is disordered; it reads SHQPGPEAPA…GEKKDVSGPM (80 aa). Basic and acidic residues-rich tracts occupy residues 234–248 and 261–275; these read LKKE…EKFQ and GEKK…KRDP. Positions 344-354 match the 'HIGH' region motif; sequence PNVTGSLHLGH. A phosphoserine mark is found at Ser437 and Ser527. Lys645 carries the N6-acetyllysine modification. A 'KMSKS' region motif is present at residues 862 to 866; sequence KMSKS. ATP is bound at residue Lys865.

It belongs to the class-I aminoacyl-tRNA synthetase family. In terms of assembly, forms high-molecular-mass aggregates with elongation factor 1.

The catalysed reaction is tRNA(Val) + L-valine + ATP = L-valyl-tRNA(Val) + AMP + diphosphate. With respect to regulation, can be regulated by protein kinase C-dependent phosphorylation. In terms of biological role, catalyzes the attachment of valine to tRNA(Val). The sequence is that of Valine--tRNA ligase from Homo sapiens (Human).